Here is an 80-residue protein sequence, read N- to C-terminus: Nuclear protein 1 (80 aa).

2 disordered regions span residues 1 to 21 (MATLPPTANPSQQPLNLEDED) and 38 to 80 (VGGG…KAWR). A compositionally biased stretch (basic and acidic residues) spans 61–80 (GHERKLLTKFQNSERKKAWR). Residues 64–80 (RKLLTKFQNSERKKAWR) carry the Nuclear localization signal motif.

It belongs to the NUPR family. In terms of assembly, monomer. Directly interacts with MSL1 and binds MORF4L1, two components of histone acetyltransferase complex; the interaction with MORF4L1 may be mediated by MSL1. Interacts with EP300; this interaction enhances the effect of EP300 on PAX2 transcription factor activity. Interacts with PAXIP1; this interaction prevents PAXIP1 inhibition of PAX2 transcription factor activity. Interacts with COPS5; this interaction allows COPS5-dependent CDKN1B nuclear to cytoplasm translocation. Interacts with RNF2. Interacts with FOXO3; this interaction represses FOXO3 transactivation. Interacts with PTMA; regulates apoptotic process. Interacts with MYOD1, EP300 and DDX5; this interaction coordinates the association of anti-proliferative and pro-myogenic proteins at the myogenin promoter. Interacts with TP53; interaction is stress-dependent. Forms a complex with EP300 and TP53; this complex binds CDKN1A promoter leading to transcriptional induction of CDKN1A. In terms of processing, phosphorylated. Phosphorylation promotes DNA-binding activity. Post-translationally, acetylated. In terms of tissue distribution, highly expressed in pancreas and both ovaries and testes.

It localises to the nucleus. The protein localises to the cytoplasm. The protein resides in the perinuclear region. In terms of biological role, transcription regulator that converts stress signals into a program of gene expression that empowers cells with resistance to the stress induced by a change in their microenvironment. Thereby participates in the regulation of many processes namely cell-cycle, apoptosis, autophagy and DNA repair responses. Controls cell cycle progression and protects cells from genotoxic stress induced by doxorubicin through the complex formation with TP53 and EP300 that binds CDKN1A promoter leading to transcriptional induction of CDKN1A. Protects pancreatic cancer cells from stress-induced cell death by binding the RELB promoter and activating its transcription, leading to IER3 transactivation. Negatively regulates apoptosis through interaction with PTMA. Inhibits autophagy-induced apoptosis in cardiac cells through FOXO3 interaction, inducing cytoplasmic translocation of FOXO3 thereby preventing the FOXO3 association with the pro-autophagic BNIP3 promoter. Inhibits cell growth and facilitates programmed cell death by apoptosis after adriamycin-induced DNA damage through transactivation of TP53. Regulates methamphetamine-induced apoptosis and autophagy through DDIT3-mediated endoplasmic reticulum stress pathway. Participates in DNA repair following gamma-irradiation by facilitating DNA access of the transcription machinery through interaction with MSL1 leading to inhibition of histone H4' Lys-16' acetylation (H4K16ac). Coactivator of PAX2 transcription factor activity, both by recruiting the EP300 cofactor to increase PAX2 transcription factor activity and by binding PAXIP1 to suppress PAXIP1-induced inhibition on PAX2. Positively regulates cell cycle progression through interaction with COPS5 inducing cytoplasmic translocation of CDKN1B leading to the CDKN1B degradation. Coordinates, through its interaction with EP300, the assiociation of MYOD1, EP300 and DDX5 to the MYOG promoter, leading to inhibition of cell-cycle progression and myogenic differentiation promotion. Negatively regulates beta cell proliferation via inhibition of cell-cycle regulatory genes expression through the suppression of their promoter activities. Also required for LHB expression and ovarian maturation. Exacerbates CNS inflammation and demyelination upon cuprizone treatment. This chain is Nuclear protein 1, found in Mus musculus (Mouse).